The sequence spans 249 residues: tRNA pseudouridine synthase A (249 aa).

The Nucleophile role is filled by Asp52. Tyr111 serves as a coordination point for substrate.

This sequence belongs to the tRNA pseudouridine synthase TruA family. In terms of assembly, homodimer.

The enzyme catalyses uridine(38/39/40) in tRNA = pseudouridine(38/39/40) in tRNA. Its function is as follows. Formation of pseudouridine at positions 38, 39 and 40 in the anticodon stem and loop of transfer RNAs. The protein is tRNA pseudouridine synthase A of Maricaulis maris (strain MCS10) (Caulobacter maris).